The sequence spans 36 residues: Light-harvesting protein B-1015 gamma chain (36 aa).

Its function is as follows. One of the components of the bacteriochlorophyll-protein complex in the chromatophore membrane. The sequence is that of Light-harvesting protein B-1015 gamma chain from Blastochloris viridis (Rhodopseudomonas viridis).